The following is a 239-amino-acid chain: Transcriptional regulatory protein DcuR (239 aa).

The Response regulatory domain maps to 3–121 (NVLIIDDDAM…RFEEALTGWR (119 aa)). Residue Asp56 is modified to 4-aspartylphosphate. The H-T-H motif DNA-binding region spans 181-200 (TDELANEVNISRVSCRKYLI).

In terms of processing, phosphorylated and activated by DcuS.

The protein resides in the cytoplasm. Member of the two-component regulatory system DcuR/DcuS. Involved in the C4-dicarboxylate-stimulated regulation of the genes encoding the anaerobic fumarate respiratory system (frdABCD; nuoAN; dcuB; dcuC; sdhCDAB; etc.). Weakly regulates the aerobic C4-dicarboxylate transporter dctA. This is Transcriptional regulatory protein DcuR (dcuR) from Shigella flexneri.